A 529-amino-acid polypeptide reads, in one-letter code: Cytochrome P450 monooxygenase 136 (529 aa).

A helical membrane pass occupies residues 9-29 (SPLALAVLSIATCQLALVWWY). Cys447 contacts heme.

Belongs to the cytochrome P450 family. It depends on heme as a cofactor.

The protein localises to the membrane. It functions in the pathway secondary metabolite biosynthesis. Cytochrome P450 monooxygenase that is able to use delta(6)-protoilludene as a substrate to produce delta(6)-protoilludene-5-ol. In Postia placenta (strain ATCC 44394 / Madison 698-R) (Brown rot fungus), this protein is Cytochrome P450 monooxygenase 136.